Consider the following 456-residue polypeptide: MATAYIIGLGRSGIAAARLLKIQGWEVILSDRAHSPNLEITQQELGQEGITVKLADHPSLIDSNLPNLIVVSPGVPWDVNFLQEARDRGIDVIGELELAWRSLQSSPWVGITGTNGKTTTTALVAAIFQASGLNAPSCGNIGYAACELALSQTKTKASSFDWIIAEVSSYQIESSRELAPKIGIWTTFTPDHLSRHKTLDNYYAIKASLLRRCELQIFNGDDPYLHQVGLHQWADAYWTTVKGKEHLLCDAAKGVYLQDNWIVAFGELIAPLNLFKMVGVHNQQNLLMAVGAARLAGIEKGAIAQAIATFKGVPHRLELITNIDGIDFINDSKATNYDAAEVGLVSVNASVILIAGGEAKEGDDRRWIEQIKAKVATVLLIGEAATAFAQRLQQSNYEAYEIVETMDNAVKRGLELAKKQQAKVVLLSPACASFDQYQSFEHRGDHFRQLCQALKE.

Position 113 to 119 (113 to 119) interacts with ATP; it reads GTNGKTT.

Belongs to the MurCDEF family.

It is found in the cytoplasm. It catalyses the reaction UDP-N-acetyl-alpha-D-muramoyl-L-alanine + D-glutamate + ATP = UDP-N-acetyl-alpha-D-muramoyl-L-alanyl-D-glutamate + ADP + phosphate + H(+). Its pathway is cell wall biogenesis; peptidoglycan biosynthesis. Cell wall formation. Catalyzes the addition of glutamate to the nucleotide precursor UDP-N-acetylmuramoyl-L-alanine (UMA). This is UDP-N-acetylmuramoylalanine--D-glutamate ligase from Rippkaea orientalis (strain PCC 8801 / RF-1) (Cyanothece sp. (strain PCC 8801)).